Here is a 451-residue protein sequence, read N- to C-terminus: Exodeoxyribonuclease 7 large subunit (451 aa).

Belongs to the XseA family. As to quaternary structure, heterooligomer composed of large and small subunits.

It is found in the cytoplasm. It catalyses the reaction Exonucleolytic cleavage in either 5'- to 3'- or 3'- to 5'-direction to yield nucleoside 5'-phosphates.. Functionally, bidirectionally degrades single-stranded DNA into large acid-insoluble oligonucleotides, which are then degraded further into small acid-soluble oligonucleotides. This is Exodeoxyribonuclease 7 large subunit from Neisseria meningitidis serogroup C / serotype 2a (strain ATCC 700532 / DSM 15464 / FAM18).